Here is a 271-residue protein sequence, read N- to C-terminus: ATP synthase subunit a (271 aa).

5 helical membrane-spanning segments follow: residues 40–60 (TINI…LVLF), 100–120 (LIAP…LMDL), 146–166 (DVNV…FYSI), 220–240 (LIFI…LNVP), and 242–262 (AIFH…LTIV).

It belongs to the ATPase A chain family. As to quaternary structure, F-type ATPases have 2 components, CF(1) - the catalytic core - and CF(0) - the membrane proton channel. CF(1) has five subunits: alpha(3), beta(3), gamma(1), delta(1), epsilon(1). CF(0) has three main subunits: a(1), b(2) and c(9-12). The alpha and beta chains form an alternating ring which encloses part of the gamma chain. CF(1) is attached to CF(0) by a central stalk formed by the gamma and epsilon chains, while a peripheral stalk is formed by the delta and b chains.

It localises to the cell inner membrane. Functionally, key component of the proton channel; it plays a direct role in the translocation of protons across the membrane. The sequence is that of ATP synthase subunit a from Shigella dysenteriae serotype 1 (strain Sd197).